Reading from the N-terminus, the 267-residue chain is Urease accessory protein UreD (267 aa).

The protein belongs to the UreD family. UreD, UreF and UreG form a complex that acts as a GTP-hydrolysis-dependent molecular chaperone, activating the urease apoprotein by helping to assemble the nickel containing metallocenter of UreC. The UreE protein probably delivers the nickel.

It localises to the cytoplasm. Required for maturation of urease via the functional incorporation of the urease nickel metallocenter. This Synechococcus sp. (strain JA-2-3B'a(2-13)) (Cyanobacteria bacterium Yellowstone B-Prime) protein is Urease accessory protein UreD.